Reading from the N-terminus, the 178-residue chain is Nicotinamide-nucleotide adenylyltransferase (178 aa).

Belongs to the archaeal NMN adenylyltransferase family.

The protein resides in the cytoplasm. It catalyses the reaction beta-nicotinamide D-ribonucleotide + ATP + H(+) = diphosphate + NAD(+). The protein operates within cofactor biosynthesis; NAD(+) biosynthesis; NAD(+) from nicotinamide D-ribonucleotide: step 1/1. The protein is Nicotinamide-nucleotide adenylyltransferase of Pyrobaculum neutrophilum (strain DSM 2338 / JCM 9278 / NBRC 100436 / V24Sta) (Thermoproteus neutrophilus).